Reading from the N-terminus, the 298-residue chain is Serpentine receptor class delta-34 (298 aa).

A run of 6 helical transmembrane segments spans residues 10–30 (SSIM…FTQV), 54–74 (ACFF…FAIP), 99–119 (MILL…VITY), 158–178 (LATN…IVFI), 207–227 (LTIQ…AHLI), and 242–262 (VLYM…IVTI).

The protein belongs to the nematode receptor-like protein srd family.

It localises to the membrane. The chain is Serpentine receptor class delta-34 (srd-34) from Caenorhabditis elegans.